The primary structure comprises 389 residues: Lipid-A-disaccharide synthase (389 aa).

Belongs to the LpxB family.

The enzyme catalyses a lipid X + a UDP-2-N,3-O-bis[(3R)-3-hydroxyacyl]-alpha-D-glucosamine = a lipid A disaccharide + UDP + H(+). The protein operates within bacterial outer membrane biogenesis; LPS lipid A biosynthesis. Its function is as follows. Condensation of UDP-2,3-diacylglucosamine and 2,3-diacylglucosamine-1-phosphate to form lipid A disaccharide, a precursor of lipid A, a phosphorylated glycolipid that anchors the lipopolysaccharide to the outer membrane of the cell. This is Lipid-A-disaccharide synthase from Burkholderia ambifaria (strain MC40-6).